The sequence spans 501 residues: Glycerol kinase (501 aa).

Threonine 14 contributes to the ADP binding site. The ATP site is built by threonine 14, threonine 15, and serine 16. Threonine 14 provides a ligand contact to sn-glycerol 3-phosphate. Position 18 (arginine 18) interacts with ADP. Positions 84, 85, and 136 each coordinate sn-glycerol 3-phosphate. Glycerol-binding residues include arginine 84, glutamate 85, and tyrosine 136. Residue histidine 231 is modified to Phosphohistidine; by HPr. Aspartate 245 contributes to the sn-glycerol 3-phosphate binding site. Residues aspartate 245 and glutamine 246 each contribute to the glycerol site. ADP is bound by residues threonine 267 and glycine 310. Residues threonine 267, glycine 310, glutamine 314, and glycine 411 each contribute to the ATP site. Residues glycine 411 and asparagine 415 each contribute to the ADP site.

The protein belongs to the FGGY kinase family. In terms of assembly, homotetramer and homodimer (in equilibrium). The phosphoenolpyruvate-dependent sugar phosphotransferase system (PTS), including enzyme I, and histidine-containing protein (HPr) are required for the phosphorylation of His-231, which leads to the activation of the enzyme.

It catalyses the reaction glycerol + ATP = sn-glycerol 3-phosphate + ADP + H(+). It functions in the pathway polyol metabolism; glycerol degradation via glycerol kinase pathway; sn-glycerol 3-phosphate from glycerol: step 1/1. Its activity is regulated as follows. Activated by phosphorylation and inhibited by fructose 1,6-bisphosphate (FBP). In terms of biological role, key enzyme in the regulation of glycerol uptake and metabolism. Catalyzes the phosphorylation of glycerol to yield sn-glycerol 3-phosphate. In Enterococcus faecalis (strain ATCC 700802 / V583), this protein is Glycerol kinase.